A 192-amino-acid polypeptide reads, in one-letter code: Ion-translocating oxidoreductase complex subunit B (192 aa).

The hydrophobic stretch occupies residues 1-26 (MSTIWIAIAALSALALAFGLVLGYAS). One can recognise a 4Fe-4S domain in the interval 32–91 (ENDPIVEEVEAMLPQSQCGQCGYPGCRPYAEAVALNGENINKCGPGGEAMMLKLAEKLNV). [4Fe-4S] cluster-binding residues include Cys49, Cys52, Cys57, Cys74, Cys117, Cys120, Cys123, Cys127, Cys147, Cys150, Cys153, and Cys157. 2 4Fe-4S ferredoxin-type domains span residues 108–137 (QVAWIDESNCIGCTKCIQACPVDAIIGSTK) and 138–167 (AVHTVVSDLCTGCDLCVAPCPTDCIELRPI).

It belongs to the 4Fe4S bacterial-type ferredoxin family. RnfB subfamily. The complex is composed of six subunits: RnfA, RnfB, RnfC, RnfD, RnfE and RnfG. It depends on [4Fe-4S] cluster as a cofactor.

The protein localises to the cell inner membrane. Part of a membrane-bound complex that couples electron transfer with translocation of ions across the membrane. The protein is Ion-translocating oxidoreductase complex subunit B of Pectobacterium carotovorum subsp. carotovorum (strain PC1).